The sequence spans 303 residues: MAKVSGRSKKTIVDDEISDKTASASESASIALTSKRKRKSPPRNAPLQRSSPYRGVTRHRWTGRYEAHLWDKNSWNDTQTKKGRQVYLGAYDEEEAAARAYDLAALKYWGRDTLLNFPLPSYDEDVKEMEGQSKEEYIGSLRRKSSGFSRGVSKYRGVARHHHNGRWEARIGRVFATQEEAAIAYDIAAIEYRGLNAVTNFDVSRYLNPNAAADKADSDSKPIRSPSREPESSDDNKSPKSEEVIEPSTSPEVIPTRRSFPDDIQTYFGCQDSGKLATEEDVIFDCFNSYINPGFYNEFDYGP.

Residues 1–10 show a composition bias toward basic residues; it reads MAKVSGRSKK. The interval 1-55 is disordered; the sequence is MAKVSGRSKKTIVDDEISDKTASASESASIALTSKRKRKSPPRNAPLQRSSPYRG. Positions 20-32 are enriched in polar residues; sequence KTASASESASIAL. 2 consecutive DNA-binding regions (AP2/ERF) follow at residues 52–118 and 154–202; these read PYRG…LNFP and KYRG…TNFD. A disordered region spans residues 212 to 259; sequence AADKADSDSKPIRSPSREPESSDDNKSPKSEEVIEPSTSPEVIPTRRS. Over residues 214–243 the composition is skewed to basic and acidic residues; sequence DKADSDSKPIRSPSREPESSDDNKSPKSEE.

This sequence belongs to the AP2/ERF transcription factor family. AP2 subfamily.

The protein localises to the nucleus. Functionally, probably acts as a transcriptional activator. Binds to the GCC-box pathogenesis-related promoter element. May be involved in the regulation of gene expression by stress factors and by components of stress signal transduction pathways. This chain is AP2-like ethylene-responsive transcription factor At1g79700, found in Arabidopsis thaliana (Mouse-ear cress).